Consider the following 256-residue polypeptide: Thiazole synthase (256 aa).

Lys-95 (schiff-base intermediate with DXP) is an active-site residue. 1-deoxy-D-xylulose 5-phosphate is bound by residues Gly-156, 182–183 (AG), and 204–205 (NT).

The protein belongs to the ThiG family. Homotetramer. Forms heterodimers with either ThiH or ThiS.

Its subcellular location is the cytoplasm. It carries out the reaction [ThiS sulfur-carrier protein]-C-terminal-Gly-aminoethanethioate + 2-iminoacetate + 1-deoxy-D-xylulose 5-phosphate = [ThiS sulfur-carrier protein]-C-terminal Gly-Gly + 2-[(2R,5Z)-2-carboxy-4-methylthiazol-5(2H)-ylidene]ethyl phosphate + 2 H2O + H(+). The protein operates within cofactor biosynthesis; thiamine diphosphate biosynthesis. Catalyzes the rearrangement of 1-deoxy-D-xylulose 5-phosphate (DXP) to produce the thiazole phosphate moiety of thiamine. Sulfur is provided by the thiocarboxylate moiety of the carrier protein ThiS. In vitro, sulfur can be provided by H(2)S. The sequence is that of Thiazole synthase from Salmonella enteritidis PT4 (strain P125109).